We begin with the raw amino-acid sequence, 143 residues long: Transcriptional regulator MraZ (143 aa).

SpoVT-AbrB domains lie at 5 to 47 (EFLH…PMDE) and 76 to 119 (AIEC…ANDA).

The protein belongs to the MraZ family. In terms of assembly, forms oligomers.

It is found in the cytoplasm. Its subcellular location is the nucleoid. The chain is Transcriptional regulator MraZ from Oceanobacillus iheyensis (strain DSM 14371 / CIP 107618 / JCM 11309 / KCTC 3954 / HTE831).